A 172-amino-acid polypeptide reads, in one-letter code: Signal peptidase complex catalytic subunit SEC11 (172 aa).

Residues 1–14 (MLSGLQNPRQAAAQ) are Cytoplasmic-facing. The helical; Signal-anchor for type II membrane protein transmembrane segment at 15–35 (LMNFALILSTAFMMWKGLSVA) threads the bilayer. Over 36-172 (TDSPSPIVVV…MGLLVVIQRE (137 aa)) the chain is Lumenal. Residues Ser49, His90, and Asp115 each act as charge relay system in the active site. Residues 158 to 169 (VMLGIMGLLVVI) are C-terminal short (CTS) helix.

The protein belongs to the peptidase S26B family. As to quaternary structure, component of the signal peptidase complex (SPC) composed of a catalytic subunit SEC11 and three accessory subunits SPC1, SPC2 and SPC3. The complex induces a local thinning of the ER membrane which is used to measure the length of the signal peptide (SP) h-region of protein substrates. This ensures the selectivity of the complex towards h-regions shorter than 18-20 amino acids. SPC associates with the translocon complex.

Its subcellular location is the endoplasmic reticulum membrane. It catalyses the reaction Cleavage of hydrophobic, N-terminal signal or leader sequences from secreted and periplasmic proteins.. In terms of biological role, catalytic component of the signal peptidase complex (SPC) which catalyzes the cleavage of N-terminal signal sequences from nascent proteins as they are translocated into the lumen of the endoplasmic reticulum. Specifically cleaves N-terminal signal peptides that contain a hydrophobic alpha-helix (h-region) shorter than 18-20 amino acids. The sequence is that of Signal peptidase complex catalytic subunit SEC11 (SEC11) from Metarhizium acridum (strain CQMa 102).